Consider the following 772-residue polypeptide: TSA1-like protein (772 aa).

The N-terminal stretch at 1 to 24 is a signal peptide; sequence MGTKFLALGLSLCLVLSSFYQVSC. The interval 49–72 is disordered; the sequence is LQGNEAVDQTETSGQKNSTVSDNN. EFE repeat repeat units lie at residues 98 to 138, 139 to 176, 177 to 213, 214 to 251, 252 to 292, 293 to 330, 331 to 368, 369 to 407, 408 to 439, and 440 to 472; these read GAVT…KVEE, SKDD…DSAQ, GLDD…DDLT, GIND…STSS, TDDE…VKDD, VDDK…ADNK, AEGD…DFSE, GDDS…STGD, KDDD…EELK, and NESE…NGEN. The 10 X approximate EFE repeat stretch occupies residues 98-472; it reads GAVTDEVDKP…ATNAKANGEN (375 aa). Residues 187–476 adopt a coiled-coil conformation; it reads QSMLDEIERD…KANGENSAKN (290 aa). Disordered regions lie at residues 465–487 and 555–585; these read NAKA…VQKS and HRKE…ATSE. Residues 466–487 show a composition bias toward polar residues; sequence AKANGENSAKNPSTISTTVQKS. Residues 561–585 show a composition bias toward low complexity; it reads SKVGSVLGSSSSVTSTTSESAATSE. A coiled-coil region spans residues 688-748; sequence DALHIRIVAI…AVHKAKDEQA (61 aa).

In terms of assembly, has no interaction with PYK10 and is not part of the PYK10 complex. Interacts directly or indirectly with MEB1 and MEB2. In terms of tissue distribution, expressed in roots. Detected in shoot apex.

It is found in the endoplasmic reticulum lumen. Functionally, responsible for the ER body formation. Regulates the number and shape of the ER bodies and the accumulation of PYK10 in ER bodies, but is not involved in the expression of PYK10. The polypeptide is TSA1-like protein (NAI2) (Arabidopsis thaliana (Mouse-ear cress)).